A 365-amino-acid chain; its full sequence is Mitogen-activated protein kinase p38b (365 aa).

The Protein kinase domain occupies 24–311 (YQNLQPVGQG…AEQALAHPYM (288 aa)). Residues 30–38 (VGQGAYGQV) and lysine 53 each bind ATP. Aspartate 153 (proton acceptor) is an active-site residue. Threonine 183 is subject to Phosphothreonine. The TXY motif lies at 183-185 (TGY). Tyrosine 185 carries the phosphotyrosine modification.

It belongs to the protein kinase superfamily. CMGC Ser/Thr protein kinase family. MAP kinase subfamily. Mg(2+) is required as a cofactor. Post-translationally, dually phosphorylated on Thr-183 and Tyr-185, which activates the enzyme. At mid-embryogenesis, highest expression is seen in developing anterior and posterior midguts. Almost ubiquitous expression throughout all development.

The protein resides in the nucleus. It catalyses the reaction L-seryl-[protein] + ATP = O-phospho-L-seryl-[protein] + ADP + H(+). It carries out the reaction L-threonyl-[protein] + ATP = O-phospho-L-threonyl-[protein] + ADP + H(+). Its activity is regulated as follows. Activated by threonine and tyrosine phosphorylation by Mkk3. Its function is as follows. Kinase involved in dpp signal transduction pathway in the process of wing morphogenesis when the levels of dpp are enhanced or inhibited. May down-regulate insect immunity gene expression after prolonged infection. The polypeptide is Mitogen-activated protein kinase p38b (Drosophila melanogaster (Fruit fly)).